We begin with the raw amino-acid sequence, 221 residues long: DELTA-actitoxin-Ucs1a (221 aa).

The signal sequence occupies residues 1–19 (MNRLIVLCLFVAMIYATIA). A propeptide spanning residues 20–42 (LPKKEDISNDERSISVSKVPVKK) is cleaved from the precursor. A plays an important role in the hemolytic activity region spans residues 45 to 54 (AIAGAVIEGA). Residues 53 to 72 (GAKLTFGILEKILTVLGDIN) are N-terminal region. Positions 96, 129, 147, 149, 175, 179, and 180 each coordinate phosphocholine. The interval 147-162 (SVPYDYNLYSNWWNIK) is trp-rich region, which is important for the binding to lipid membrane. The Cell attachment site, crucial for protein stability signature appears at 186-188 (KGD).

The protein belongs to the actinoporin family. Sea anemone subfamily. In terms of assembly, octamer or nonamer in membranes. Monomer in the soluble state.

It is found in the secreted. Its subcellular location is the nematocyst. The protein localises to the target cell membrane. Functionally, pore-forming protein that forms cations-selective hydrophilic pores of around 1 nm and causes cytolysis. Pore formation is a multi-step process that involves specific recognition of membrane sphingomyelin (but neither cholesterol nor phosphatidylcholine) using aromatic rich region and adjacent phosphocholine (POC) binding site, firm binding to the membrane (mainly driven by hydrophobic interactions) accompanied by the transfer of the N-terminal region to the lipid-water interface and finally pore formation after oligomerization of monomers. The polypeptide is DELTA-actitoxin-Ucs1a (Urticina crassicornis (Mottled anemone)).